Consider the following 428-residue polypeptide: UPF0597 protein Dde_0807 (428 aa).

This sequence belongs to the UPF0597 family.

This chain is UPF0597 protein Dde_0807, found in Oleidesulfovibrio alaskensis (strain ATCC BAA-1058 / DSM 17464 / G20) (Desulfovibrio alaskensis).